The sequence spans 622 residues: Palmitoyl-protein thioesterase-dolichyl pyrophosphate phosphatase fusion 1 (622 aa).

The signal sequence occupies residues 1–24; sequence MLSCSSFLIFFLFSWVLLPMKSFA. Residues 25–405 are Lumenal-facing; the sequence is IPIISLDKVR…NVSEEKGPKS (381 aa). An intrachain disulfide couples Cys-106 to Cys-138. Ser-125 is a catalytic residue. Residue Asn-223 is glycosylated (N-linked (GlcNAc...) asparagine). Residue Asp-245 is part of the active site. Asn-260 carries an N-linked (GlcNAc...) asparagine glycan. His-298 is a catalytic residue. Asn-396 carries N-linked (GlcNAc...) asparagine glycosylation. Residues 406 to 426 traverse the membrane as a helical segment; the sequence is FANLAFITIFSHFFYHIDDMW. Over 427–428 the chain is Cytoplasmic; that stretch reads RS. A helical membrane pass occupies residues 429-449; that stretch reads TLGLFSLIPQIIGIIYLTVMF. The Lumenal segment spans residues 450-488; sequence TGRELDTFMQFGGQVVNEFINYVVKVSLKYPRPADIEYG. A helical transmembrane segment spans residues 489 to 511; sequence VGYGMPSSHSQFMGFFSAYMIAW. At 512–519 the chain is on the cytoplasmic side; that stretch reads DYKYRRSQ. Residues 520-540 traverse the membrane as a helical segment; sequence CFSMLSFAKYAIYLTLSTFVC. Residues 541 to 552 lie on the Lumenal side of the membrane; that stretch reads SSRYLLDFHYLT. A helical transmembrane segment spans residues 553–573; the sequence is QVVYGYMIGFGVGLFWVYLVG. The Cytoplasmic portion of the chain corresponds to 574-622; that stretch reads KLRSLGVTKWLLSLPPLQFFYIKDTIPHSKDNHKRQWLESKQFKNQKSN.

It in the N-terminal section; belongs to the palmitoyl-protein thioesterase family. In the C-terminal section; belongs to the dolichyldiphosphatase family. Proteolytically cleaved, possibly by krp1.

It is found in the vacuole. Its subcellular location is the endoplasmic reticulum membrane. It carries out the reaction S-hexadecanoyl-L-cysteinyl-[protein] + H2O = L-cysteinyl-[protein] + hexadecanoate + H(+). It catalyses the reaction a di-trans,poly-cis-dolichyl diphosphate + H2O = a di-trans,poly-cis-dolichyl phosphate + phosphate + H(+). Its function is as follows. Essential protein. Removes thioester-linked fatty acyl groups such as palmitate from modified cysteine residues in proteins or peptides during vacuolar degradation. Required for efficient N-glycosylation. Necessary for maintaining optimal levels of dolichol-linked oligosaccharides. The protein is Palmitoyl-protein thioesterase-dolichyl pyrophosphate phosphatase fusion 1 (pdf1) of Schizosaccharomyces pombe (strain 972 / ATCC 24843) (Fission yeast).